Reading from the N-terminus, the 162-residue chain is Ecotin (162 aa).

The signal sequence occupies residues 1-18 (MFVPAVVFAALASTSAWA). Cys70 and Cys107 are disulfide-bonded.

The protein belongs to the protease inhibitor I11 (ecotin) family. As to quaternary structure, homodimer.

It localises to the periplasm. Functionally, general inhibitor of pancreatic serine proteases: inhibits chymotrypsin, trypsin, elastases, factor X, kallikrein as well as a variety of other proteases. This Salmonella choleraesuis (strain SC-B67) protein is Ecotin.